Consider the following 304-residue polypeptide: Homoserine O-acetyltransferase (304 aa).

Cys142 serves as the catalytic Acyl-thioester intermediate. Substrate-binding residues include Lys163 and Ser191. The active-site Proton acceptor is the His234. The active site involves Glu236. Arg248 serves as a coordination point for substrate.

It belongs to the MetA family.

It localises to the cytoplasm. It carries out the reaction L-homoserine + acetyl-CoA = O-acetyl-L-homoserine + CoA. Its pathway is amino-acid biosynthesis; L-methionine biosynthesis via de novo pathway; O-acetyl-L-homoserine from L-homoserine: step 1/1. Functionally, transfers an acetyl group from acetyl-CoA to L-homoserine, forming acetyl-L-homoserine. This chain is Homoserine O-acetyltransferase, found in Thermotoga petrophila (strain ATCC BAA-488 / DSM 13995 / JCM 10881 / RKU-1).